The sequence spans 385 residues: Glucose-fructose oxidoreductase domain-containing protein 2 (385 aa).

An N-terminal signal peptide occupies residues 1–25; that stretch reads MKMLPGVGVFGTGSSARVLVPLLRA.

The protein belongs to the Gfo/Idh/MocA family.

It is found in the secreted. The protein resides in the extracellular space. Its subcellular location is the extracellular matrix. In terms of biological role, promotes matrix assembly. The chain is Glucose-fructose oxidoreductase domain-containing protein 2 (GFOD2) from Bos taurus (Bovine).